We begin with the raw amino-acid sequence, 1159 residues long: RAD51-associated protein 2 (1159 aa).

Residues 1–35 (MSLPQPTPRMAELRKPTSSLTPPEDPDSQPPSSKR) are disordered. The interaction with RAD51 stretch occupies residues 1111–1159 (SHFPHGISRVRPLKTCSRPIRIGLSRKARIKQLHPYLKQMCYGNLKENF).

As to quaternary structure, interacts with RAD51. In terms of tissue distribution, specifically expressed in meiotic tissues. Highly expressed in testis.

The chain is RAD51-associated protein 2 (RAD51AP2) from Homo sapiens (Human).